Reading from the N-terminus, the 380-residue chain is Cytochrome b (380 aa).

4 helical membrane-spanning segments follow: residues 34-54 (FGSLLAVCLATQIITGLLLAA), 78-99 (WLIRNLHANGASFFFICIYLHI), 114-134 (WNTGVILLLTLMATAFVGYVL), and 179-199 (FFALHFLLPFIIAGITIIHLA). 2 residues coordinate heme b: H84 and H98. Heme b-binding residues include H183 and H197. H202 lines the a ubiquinone pocket. The next 4 helical transmembrane spans lie at 227–247 (LKDILGLALMITPLLTLALFS), 289–309 (LGGVLALAASVFILFLIPLLH), 321–341 (LSQLLFWLLAANLFILTWIGS), and 348–368 (FIIIGQLASLSYFTTLLILFP).

It belongs to the cytochrome b family. As to quaternary structure, the cytochrome bc1 complex contains 11 subunits: 3 respiratory subunits (MT-CYB, CYC1 and UQCRFS1), 2 core proteins (UQCRC1 and UQCRC2) and 6 low-molecular weight proteins (UQCRH/QCR6, UQCRB/QCR7, UQCRQ/QCR8, UQCR10/QCR9, UQCR11/QCR10 and a cleavage product of UQCRFS1). This cytochrome bc1 complex then forms a dimer. Requires heme b as cofactor.

The protein resides in the mitochondrion inner membrane. Component of the ubiquinol-cytochrome c reductase complex (complex III or cytochrome b-c1 complex) that is part of the mitochondrial respiratory chain. The b-c1 complex mediates electron transfer from ubiquinol to cytochrome c. Contributes to the generation of a proton gradient across the mitochondrial membrane that is then used for ATP synthesis. This Cyrtonyx montezumae (Montezuma quail) protein is Cytochrome b (MT-CYB).